Here is a 507-residue protein sequence, read N- to C-terminus: DNA replication licensing factor MCM6 (507 aa).

An MCM domain is found at L32–V239. ATP contacts are provided by H45, S85, T86, A87, K88, S89, and N190. The Arginine finger signature appears at S214–D217. Residues R305 and E308 each contribute to the ADP site. K329 is subject to N6-acetyllysine. The disordered stretch occupies residues G365 to E392. Phosphoserine occurs at positions 375, 390, and 448. T477 is modified (phosphothreonine).

The protein belongs to the MCM family. As to quaternary structure, component of the MCM2-7 complex. The complex forms a toroidal hexameric ring with the proposed subunit order MCM2-MCM6-MCM4-MCM7-MCM3-MCM5. Component of the CMG helicase complex, a hexameric ring of related MCM2-7 subunits stabilized by CDC45 and the tetrameric GINS complex. May interact with MCM10. Interacts with TIPIN. Interacts with CDT1. Interacts with MCMBP. Interacts with DDI2. O-glycosylated (O-GlcNAcylated), in a cell cycle-dependent manner.

The protein localises to the nucleus. It is found in the chromosome. It carries out the reaction ATP + H2O = ADP + phosphate + H(+). Acts as a component of the MCM2-7 complex (MCM complex) which is the replicative helicase essential for 'once per cell cycle' DNA replication initiation and elongation in eukaryotic cells. Core component of CDC45-MCM-GINS (CMG) helicase, the molecular machine that unwinds template DNA during replication, and around which the replisome is built. The active ATPase sites in the MCM2-7 ring are formed through the interaction surfaces of two neighboring subunits such that a critical structure of a conserved arginine finger motif is provided in trans relative to the ATP-binding site of the Walker A box of the adjacent subunit. The six ATPase active sites, however, are likely to contribute differentially to the complex helicase activity. The sequence is that of DNA replication licensing factor MCM6 (Mcm6) from Rattus norvegicus (Rat).